Reading from the N-terminus, the 414-residue chain is Putative transporter YoaB (414 aa).

At 1–11 (MLDKIGIPKRL) the chain is on the cytoplasmic side. A helical membrane pass occupies residues 12–32 (AWGFLGVVLFMMGDGLEQGWL). The Extracellular segment spans residues 33 to 47 (SPFLIENGLTVQQSA). Residues 48-68 (SIFSIYGIALAIASWFSGVCL) form a helical membrane-spanning segment. Over 69 to 75 (EAFGAKR) the chain is Cytoplasmic. A helical membrane pass occupies residues 76 to 96 (TMFMGLLFYVIGTAAFIVFGF). At 97–107 (EQLNLPVMYVT) the chain is on the extracellular side. The chain crosses the membrane as a helical span at residues 108 to 128 (YFVKGLGYPLFAYSFLTWVIY). Residues 129 to 136 (RTPQSKLS) are Cytoplasmic-facing. The chain crosses the membrane as a helical span at residues 137-157 (TAVGWFWIAYCLGMFVFGAWY). Over 158 to 167 (SSYAIKAFGY) the chain is Extracellular. Residues 168 to 188 (LNTLWSSIFWVCLGAFFALFI) form a helical membrane-spanning segment. Over 189-219 (NKDRFEKKKRKRSETAEELLKGVTILFTNPR) the chain is Cytoplasmic. A helical membrane pass occupies residues 220–240 (VLTGGIIRIINSIGTYGFPVF). Topologically, residues 241–255 (LPMHMAQHGISTNVW) are extracellular. The chain crosses the membrane as a helical span at residues 256–276 (LQIWGTIFLGNIVFNLIFGIV). At 277–286 (GDKFGWKNTV) the chain is on the cytoplasmic side. Residues 287 to 307 (IWFGGVGCGIFTVLLYYAPVF) traverse the membrane as a helical segment. At 308–316 (SGGSLAVVS) the chain is on the extracellular side. The chain crosses the membrane as a helical span at residues 317 to 337 (VIGFIWGGLLAGYVPIGAIVP). At 338–343 (TVAGKD) the chain is on the cytoplasmic side. Residues 344–364 (KGAAMSVLNLAAGLSAFVGPA) form a helical membrane-spanning segment. Residues 365 to 375 (LAWLFIGLVGA) lie on the Extracellular side of the membrane. Residues 376–398 (QGVVWIFAALYLASAVLTKCIHI) traverse the membrane as a helical segment. The Cytoplasmic portion of the chain corresponds to 399 to 414 (PEEKAVKEETSPQYAS).

The protein belongs to the major facilitator superfamily. Sugar transporter (TC 2.A.1.1) family. CsbX subfamily.

It localises to the cell membrane. The protein is Putative transporter YoaB (yoaB) of Bacillus subtilis (strain 168).